The chain runs to 634 residues: Chaperone protein dnaK2 (634 aa).

At T197 the chain carries Phosphothreonine; by autocatalysis. Low complexity predominate over residues 601 to 623 (GAAAAESGADAGAAGAGDSSSGD). The disordered stretch occupies residues 601 to 634 (GAAAAESGADAGAAGAGDSSSGDDVIDAEFTESK). The segment covering 624–634 (DVIDAEFTESK) has biased composition (acidic residues).

It belongs to the heat shock protein 70 family.

Its function is as follows. Acts as a chaperone. This chain is Chaperone protein dnaK2 (dnaK2), found in Prochlorococcus marinus (strain MIT 9313).